Consider the following 727-residue polypeptide: Glycerol-3-phosphate dehydrogenase, mitochondrial (727 aa).

Residues 1–42 (MAFQKAVKGTILVGGGALATVLGLSPFAHYRRKQVSLAYVEA) constitute a mitochondrion transit peptide. Residue 71 to 99 (DILVIGGGATGCGCALDAVTRGLKTALVE) coordinates FAD. Tyr-601 carries the phosphotyrosine modification. 2 consecutive EF-hand domains span residues 623–658 (SDID…INVQ) and 659–694 (MDEN…VQKG). Residues Asp-672, Asn-674, Asn-676, Gln-678, and Glu-683 each contribute to the Ca(2+) site.

This sequence belongs to the FAD-dependent glycerol-3-phosphate dehydrogenase family. FAD serves as cofactor.

The protein resides in the mitochondrion inner membrane. It carries out the reaction a quinone + sn-glycerol 3-phosphate = dihydroxyacetone phosphate + a quinol. Its pathway is polyol metabolism; glycerol degradation via glycerol kinase pathway; glycerone phosphate from sn-glycerol 3-phosphate (anaerobic route): step 1/1. With respect to regulation, calcium-binding enhance the activity of the enzyme. Calcium-responsive mitochondrial glycerol-3-phosphate dehydrogenase which seems to be a key component of the pancreatic beta-cell glucose-sensing device. The protein is Glycerol-3-phosphate dehydrogenase, mitochondrial of Mus musculus (Mouse).